The sequence spans 370 residues: Protein-glutamate methylesterase/protein-glutamine glutaminase of group 1 operon (370 aa).

The Response regulatory domain occupies 4–121 (KVLVVDDSGF…SRNPDKVKQL (118 aa)). Position 55 is a 4-aspartylphosphate (Asp55). A compositionally biased stretch (low complexity) spans 150–180 (PASTFTSQAQTRPAAPARAAAPTPAASQSPA). The interval 150 to 183 (PASTFTSQAQTRPAAPARAAAPTPAASQSPAPKR) is disordered. In terms of domain architecture, CheB-type methylesterase spans 179–370 (PAPKRKPYKL…IGKHLVEACV (192 aa)). Catalysis depends on residues Ser194, His221, and Asp314.

Belongs to the CheB family. In terms of processing, phosphorylated by CheA. Phosphorylation of the N-terminal regulatory domain activates the methylesterase activity.

It localises to the cytoplasm. The enzyme catalyses [protein]-L-glutamate 5-O-methyl ester + H2O = L-glutamyl-[protein] + methanol + H(+). It carries out the reaction L-glutaminyl-[protein] + H2O = L-glutamyl-[protein] + NH4(+). Involved in chemotaxis. Part of a chemotaxis signal transduction system that modulates chemotaxis in response to various stimuli. Catalyzes the demethylation of specific methylglutamate residues introduced into the chemoreceptors (methyl-accepting chemotaxis proteins or MCP) by CheR. Also mediates the irreversible deamidation of specific glutamine residues to glutamic acid. The protein is Protein-glutamate methylesterase/protein-glutamine glutaminase of group 1 operon of Pseudomonas putida (strain ATCC 47054 / DSM 6125 / CFBP 8728 / NCIMB 11950 / KT2440).